The primary structure comprises 211 residues: Beta-crystallin B3 (211 aa).

M1 is modified (N-acetylmethionine). Position 2 is an N-acetylalanine; in Beta-crystallin B3, N-terminally processed (A2). The interval 2-23 (AEQHGAPEQAAAGKSHGGLGGS) is N-terminal arm. Beta/gamma crystallin 'Greek key' domains follow at residues 24-63 (YKVT…QVES) and 64-108 (GPWL…RPLH). Residues 109 to 113 (IDGPD) are connecting peptide. Beta/gamma crystallin 'Greek key' domains follow at residues 114 to 155 (HKLH…RVIN) and 156 to 198 (GTWV…RRIR). The segment at 200 to 211 (QKWHKRGCFLSS) is C-terminal arm.

Belongs to the beta/gamma-crystallin family. As to quaternary structure, homo/heterodimer, or complexes of higher-order. The structure of beta-crystallin oligomers seems to be stabilized through interactions between the N-terminal arms.

Crystallins are the dominant structural components of the vertebrate eye lens. This is Beta-crystallin B3 (Crybb3) from Mus musculus (Mouse).